The chain runs to 321 residues: Anthranilate phosphoribosyltransferase (321 aa).

5-phospho-alpha-D-ribose 1-diphosphate contacts are provided by residues Gly-72, 75–76 (GD), Thr-80, 82–85 (NVST), 99–107 (KHGNVSITS), and Ser-111. Gly-72 serves as a coordination point for anthranilate. Residue Ser-84 participates in Mg(2+) binding. Asn-102 serves as a coordination point for anthranilate. Arg-157 serves as a coordination point for anthranilate. 2 residues coordinate Mg(2+): Asp-216 and Glu-217.

It belongs to the anthranilate phosphoribosyltransferase family. Homodimer. Mg(2+) serves as cofactor.

It carries out the reaction N-(5-phospho-beta-D-ribosyl)anthranilate + diphosphate = 5-phospho-alpha-D-ribose 1-diphosphate + anthranilate. It functions in the pathway amino-acid biosynthesis; L-tryptophan biosynthesis; L-tryptophan from chorismate: step 2/5. Functionally, catalyzes the transfer of the phosphoribosyl group of 5-phosphorylribose-1-pyrophosphate (PRPP) to anthranilate to yield N-(5'-phosphoribosyl)-anthranilate (PRA). The protein is Anthranilate phosphoribosyltransferase of Methanococcus maripaludis (strain C5 / ATCC BAA-1333).